Reading from the N-terminus, the 679-residue chain is Biosynthetic arginine decarboxylase (679 aa).

The segment at 1 to 43 is disordered; the sequence is MKHRGQEEMGVESTATSDEVVKVPANGNKLEGKNHKQKKLLPT. At Lys149 the chain carries N6-(pyridoxal phosphate)lysine. Position 331–341 (331–341) interacts with substrate; the sequence is LDVGGGLGVDY.

The protein belongs to the Orn/Lys/Arg decarboxylase class-II family. SpeA subfamily. Mg(2+) serves as cofactor. Pyridoxal 5'-phosphate is required as a cofactor.

It carries out the reaction L-arginine + H(+) = agmatine + CO2. In terms of biological role, catalyzes the biosynthesis of agmatine from arginine. The chain is Biosynthetic arginine decarboxylase from Nostoc sp. (strain PCC 7120 / SAG 25.82 / UTEX 2576).